A 294-amino-acid polypeptide reads, in one-letter code: NAD kinase (294 aa).

Asp-74 (proton acceptor) is an active-site residue. Residues 74–75, 148–149, His-159, Arg-176, Asp-178, and 189–194 each bind NAD(+); these read DG, NE, and TAYSLS.

It belongs to the NAD kinase family. Requires a divalent metal cation as cofactor.

It localises to the cytoplasm. It catalyses the reaction NAD(+) + ATP = ADP + NADP(+) + H(+). Functionally, involved in the regulation of the intracellular balance of NAD and NADP, and is a key enzyme in the biosynthesis of NADP. Catalyzes specifically the phosphorylation on 2'-hydroxyl of the adenosine moiety of NAD to yield NADP. The sequence is that of NAD kinase from Pseudoalteromonas translucida (strain TAC 125).